A 245-amino-acid polypeptide reads, in one-letter code: Probable transcriptional regulatory protein Aflv_0709 (245 aa).

Basic residues predominate over residues 1–14 (MAGHSKWKNIQRRK). The interval 1 to 21 (MAGHSKWKNIQRRKNAQDAKR) is disordered.

Belongs to the TACO1 family.

It is found in the cytoplasm. The sequence is that of Probable transcriptional regulatory protein Aflv_0709 from Anoxybacillus flavithermus (strain DSM 21510 / WK1).